The chain runs to 245 residues: MSNLEHITLEMDKVPLGDNKTLVRNTENISKHSYGGAIDGRTRNTLRVPRAVPETDDDDNDDRPFVKDGNDNPGVDDGLFSTVGGNGGNGGNVNVNVPNGGRRPSFSFPGYNGPGFVTINGVETPIPDVNAYQHKKTLAQGMMDLALLSANANQLRYVLETSSQHPYFYPSLLFISLSIIFQIAVGVGLILNGQYNIKNGHDICRANRINNYTVSGIFIVTVVNVLISAFTVDRDTVPALPANTT.

Topologically, residues 1-170 are extracellular; the sequence is MSNLEHITLE…TSSQHPYFYP (170 aa). Residues N19 and N28 are each glycosylated (N-linked (GlcNAc...) asparagine). Positions 32–101 are disordered; that stretch reads HSYGGAIDGR…NVNVNVPNGG (70 aa). A compositionally biased stretch (low complexity) spans 92-101; that stretch reads NVNVNVPNGG. A helix alpha1 region spans residues 135–146; the sequence is KKTLAQGMMDLA. A helix alpha2 region spans residues 149–165; it reads SANANQLRYVLETSSQH. Residues 171–191 traverse the membrane as a helical segment; sequence SLLFISLSIIFQIAVGVGLIL. The Cytoplasmic segment spans residues 192–211; the sequence is NGQYNIKNGHDICRANRINN. A helical transmembrane segment spans residues 212–232; it reads YTVSGIFIVTVVNVLISAFTV. Residues 233–245 are Extracellular-facing; the sequence is DRDTVPALPANTT.

The protein belongs to the ninjurin family. Homooligomer. In terms of processing, cleaved by Mmp1 protease to generate the Secreted ninjurin-A form.

Its subcellular location is the cell membrane. It localises to the secreted. In terms of biological role, effector of non-apoptotic necrotic cell death that mediates plasma membrane rupture (cytolysis): oligomerizes in response to death stimuli and promotes plasma membrane rupture by introducing hydrophilic faces of 2 alpha helices into the hydrophobic membrane, leading to release intracellular molecules that propagate the inflammatory response. Also acts as a homophilic transmembrane adhesion molecule that promotes cell adhesion by mediating homophilic interactions via its extracellular region. Functionally, secreted form generated by cleavage, which acts as a negative regulator of cell adhesion. Promotes the loss of cell adhesion in a cell non-autonomous manner. This chain is Ninjurin-A, found in Drosophila melanogaster (Fruit fly).